The chain runs to 100 residues: Co-chaperonin GroES (100 aa).

The protein belongs to the GroES chaperonin family. In terms of assembly, heptamer of 7 subunits arranged in a ring. Interacts with the chaperonin GroEL.

It localises to the cytoplasm. In terms of biological role, together with the chaperonin GroEL, plays an essential role in assisting protein folding. The GroEL-GroES system forms a nano-cage that allows encapsulation of the non-native substrate proteins and provides a physical environment optimized to promote and accelerate protein folding. GroES binds to the apical surface of the GroEL ring, thereby capping the opening of the GroEL channel. This chain is Co-chaperonin GroES, found in Mycobacterium leprae (strain Br4923).